Consider the following 247-residue polypeptide: Protein AC124 (247 aa).

The protein localises to the host cytoplasm. It localises to the host nucleus. Accelerates mortality in insect larvae. This Lepidoptera (butterflies and moths) protein is Protein AC124.